A 156-amino-acid chain; its full sequence is Small ribosomal subunit protein uS7c (156 aa).

The protein belongs to the universal ribosomal protein uS7 family. As to quaternary structure, part of the 30S ribosomal subunit.

It localises to the plastid. The protein resides in the chloroplast. In terms of biological role, one of the primary rRNA binding proteins, it binds directly to 16S rRNA where it nucleates assembly of the head domain of the 30S subunit. This Rhodomonas salina (Cryptomonas salina) protein is Small ribosomal subunit protein uS7c (rps7).